The following is a 791-amino-acid chain: DNA repair and recombination protein RAD54-like (791 aa).

Residues 1–20 (MRRSLAPSQRIGQSTASRNA) show a composition bias toward polar residues. Residues 1–53 (MRRSLAPSQRIGQSTASRNAFTPPLLQKKNKRACQKDLRLDTDADEDKERKRF) are disordered. The interval 2–9 (RRSLAPSQ) is required for chromatin remodeling, strand pairing activities and coupling of ATPase activity. Threonine 22 is modified (phosphothreonine). The segment covering 34-53 (CQKDLRLDTDADEDKERKRF) has biased composition (basic and acidic residues). Positions 175–349 (EGKKGDFNGC…FSLVNFVNPE (175 aa)) constitute a Helicase ATP-binding domain. ATP is bound at residue 188–195 (DEMGLGKT). Residues 300–303 (DEGH) carry the DEGH box motif. The 158-residue stretch at 506–663 (LLDFMLAAIR…NNESSEKHFT (158 aa)) folds into the Helicase C-terminal domain. The disordered stretch occupies residues 747 to 791 (KEVVESPESAAAEAESVEEESQPTQRKRPSPPLSDDSADEDFIGF). The span at 782–791 (DSADEDFIGF) shows a compositional bias: acidic residues.

This sequence belongs to the SNF2/RAD54 helicase family. In terms of assembly, interacts (via N-terminus) with spn-A/Rad51.

Its subcellular location is the nucleus. Involved in mitotic DNA repair and meiotic recombination. Functions in the recombinational DNA repair pathway. Essential for interhomolog gene conversion (GC), but may have a less important role in intersister GC than spn-A/Rad51. In the presence of DNA, spn-A/Rad51 enhances the ATPase activity of okr/Rad54. This chain is DNA repair and recombination protein RAD54-like, found in Drosophila ananassae (Fruit fly).